Reading from the N-terminus, the 61-residue chain is Temporin-SN4 (61 aa).

Positions 1-22 are cleaved as a signal peptide; that stretch reads MFTLKKTLLLLFFLGTINLSLC. Positions 23-44 are cleaved as a propeptide — removed in mature form; that stretch reads EEERNAEEERRDGDDEMDVEVK. Lysine amide is present on Lys61.

Belongs to the frog skin active peptide (FSAP) family. Temporin subfamily. As to expression, expressed by the skin glands.

It localises to the secreted. In terms of biological role, antimicrobial peptide. Active against some Gram-positive and Gram-negative bacterial strains. Active against fungus C.glabrata 090902 but not against C.albicans ATCC 12231. Shows weak hemolytic activity against human erythrocytes. The protein is Temporin-SN4 of Sylvirana spinulosa (Fine-spined frog).